Reading from the N-terminus, the 126-residue chain is MGKKSLVKLTRKTNPRIVSLILTLKERANGDSAPIWKDIAKRLEAPSRNYAAVNISKINRHTAEDDVLLIPGKVLGAGLLDHPVTIAALTFSDSAFEKITEAGGKCLSLEEIMEANPKGSGIRIFR.

The protein belongs to the eukaryotic ribosomal protein eL18 family.

This is Large ribosomal subunit protein eL18 from Methanosarcina acetivorans (strain ATCC 35395 / DSM 2834 / JCM 12185 / C2A).